A 263-amino-acid chain; its full sequence is Proteasome subunit alpha type-1 (263 aa).

M1 is modified (N-acetylmethionine). S110 carries the phosphoserine; alternate modification. A glycan (O-linked (GlcNAc) serine; alternate) is linked at S110. K115 participates in a covalent cross-link: Glycyl lysine isopeptide (Lys-Gly) (interchain with G-Cter in ubiquitin). Phosphoserine is present on S177. A Glycyl lysine isopeptide (Lys-Gly) (interchain with G-Cter in ubiquitin) cross-link involves residue K208. The interval 232-263 (FLDGLEERPQRKAQPSQAAEEPAEKADEPMEH) is disordered. The segment covering 253-263 (PAEKADEPMEH) has biased composition (basic and acidic residues).

Belongs to the peptidase T1A family. The 26S proteasome consists of a 20S proteasome core and two 19S regulatory subunits. The 20S proteasome core is a barrel-shaped complex made of 28 subunits that are arranged in four stacked rings. The two outer rings are each formed by seven alpha subunits, and the two inner rings are formed by seven beta subunits. The proteolytic activity is exerted by three beta-subunits PSMB5, PSMB6 and PSMB7. Interacts with NOTCH3. Interacts with ZFAND1. In terms of processing, C-terminal extension is partially cleaved off by limited proteolysis leading to a conversion of the proteasome from its latent into its active form. In terms of tissue distribution, detected in liver (at protein level).

The protein resides in the cytoplasm. Its subcellular location is the nucleus. Its function is as follows. Component of the 20S core proteasome complex involved in the proteolytic degradation of most intracellular proteins. This complex plays numerous essential roles within the cell by associating with different regulatory particles. Associated with two 19S regulatory particles, forms the 26S proteasome and thus participates in the ATP-dependent degradation of ubiquitinated proteins. The 26S proteasome plays a key role in the maintenance of protein homeostasis by removing misfolded or damaged proteins that could impair cellular functions, and by removing proteins whose functions are no longer required. Associated with the PA200 or PA28, the 20S proteasome mediates ubiquitin-independent protein degradation. This type of proteolysis is required in several pathways including spermatogenesis (20S-PA200 complex) or generation of a subset of MHC class I-presented antigenic peptides (20S-PA28 complex). This is Proteasome subunit alpha type-1 (Psma1) from Mus musculus (Mouse).